The following is a 96-amino-acid chain: Small ribosomal subunit protein bS6 (96 aa).

The protein belongs to the bacterial ribosomal protein bS6 family.

Binds together with bS18 to 16S ribosomal RNA. The polypeptide is Small ribosomal subunit protein bS6 (Beutenbergia cavernae (strain ATCC BAA-8 / DSM 12333 / CCUG 43141 / JCM 11478 / NBRC 16432 / NCIMB 13614 / HKI 0122)).